Reading from the N-terminus, the 751-residue chain is Photosystem I P700 chlorophyll a apoprotein A1 (751 aa).

Helical transmembrane passes span 73–96 (VFSA…FHGA), 159–182 (LYTT…FHYH), 198–222 (LNHH…HVSL), 294–312 (TAHH…GHMY), 349–372 (WHAQ…HHMY), 388–414 (LSLF…IFMV), 436–458 (AIIS…LYIH), and 533–551 (FLVH…LILL). [4Fe-4S] cluster contacts are provided by C575 and C584. Helical transmembrane passes span 591–612 (HVFL…HFSW) and 665–687 (LSAY…MFLF). H676 lines the chlorophyll a' pocket. Chlorophyll a contacts are provided by M684 and Y692. Residue W693 coordinates phylloquinone. The helical transmembrane segment at 725–745 (AVGVAHYLLGGIATTWSFFLA) threads the bilayer.

Belongs to the PsaA/PsaB family. In terms of assembly, the PsaA/B heterodimer binds the P700 chlorophyll special pair and subsequent electron acceptors. PSI consists of a core antenna complex that captures photons, and an electron transfer chain that converts photonic excitation into a charge separation. The eukaryotic PSI reaction center is composed of at least 11 subunits. It depends on P700 is a chlorophyll a/chlorophyll a' dimer, A0 is one or more chlorophyll a, A1 is one or both phylloquinones and FX is a shared 4Fe-4S iron-sulfur center. as a cofactor.

The protein localises to the plastid. Its subcellular location is the chloroplast thylakoid membrane. The catalysed reaction is reduced [plastocyanin] + hnu + oxidized [2Fe-2S]-[ferredoxin] = oxidized [plastocyanin] + reduced [2Fe-2S]-[ferredoxin]. Functionally, psaA and PsaB bind P700, the primary electron donor of photosystem I (PSI), as well as the electron acceptors A0, A1 and FX. PSI is a plastocyanin/cytochrome c6-ferredoxin oxidoreductase, converting photonic excitation into a charge separation, which transfers an electron from the donor P700 chlorophyll pair to the spectroscopically characterized acceptors A0, A1, FX, FA and FB in turn. Oxidized P700 is reduced on the lumenal side of the thylakoid membrane by plastocyanin or cytochrome c6. This is Photosystem I P700 chlorophyll a apoprotein A1 from Tetradesmus obliquus (Green alga).